A 387-amino-acid chain; its full sequence is S-adenosylmethionine synthase (387 aa).

His-15 serves as a coordination point for ATP. Asp-17 serves as a coordination point for Mg(2+). Glu-43 serves as a coordination point for K(+). Residues Glu-56 and Gln-99 each contribute to the L-methionine site. The tract at residues 99–109 is flexible loop; the sequence is QSPDIAQGVNN. Residues 166–168, 232–233, Asp-241, 247–248, Ala-264, and Lys-268 each bind ATP; these read DAK, RF, and RK. An L-methionine-binding site is contributed by Asp-241. An L-methionine-binding site is contributed by Lys-272.

It belongs to the AdoMet synthase family. As to quaternary structure, homotetramer; dimer of dimers. Mg(2+) is required as a cofactor. It depends on K(+) as a cofactor.

Its subcellular location is the cytoplasm. The enzyme catalyses L-methionine + ATP + H2O = S-adenosyl-L-methionine + phosphate + diphosphate. It functions in the pathway amino-acid biosynthesis; S-adenosyl-L-methionine biosynthesis; S-adenosyl-L-methionine from L-methionine: step 1/1. Catalyzes the formation of S-adenosylmethionine (AdoMet) from methionine and ATP. The overall synthetic reaction is composed of two sequential steps, AdoMet formation and the subsequent tripolyphosphate hydrolysis which occurs prior to release of AdoMet from the enzyme. The chain is S-adenosylmethionine synthase from Methylobacillus flagellatus (strain ATCC 51484 / DSM 6875 / VKM B-1610 / KT).